The following is a 389-amino-acid chain: Na(+)/H(+) antiporter NhaA (389 aa).

11 consecutive transmembrane segments (helical) span residues 14 to 34 (AGGILLLVAVALAMLMANSPL), 59 to 79 (LILWINDGLMAVFFLLIGLEV), 95 to 115 (SLPTFAAIGGMLVPAGVYLLF), 124 to 144 (AGWAIPAATDIAFALGIMALL), 154 to 174 (VFLLALAIIDDLGVIVIIALF), 177 to 197 (TDLSTISLVIASLAIAGLVGL), 213 to 233 (LILWVAVLKSGVHATLAGVII), 257 to 277 (PWSTFFILPVFAFANAGVYVG), 292 to 312 (IALGLMLGKPIGVMVFSYIAV), 328 to 348 (IAPVAAMCGIGFTMSMFIASL), and 363 to 383 (LGTLIGSIMAALVGYFWLSKV).

The protein belongs to the NhaA Na(+)/H(+) (TC 2.A.33) antiporter family.

Its subcellular location is the cell inner membrane. The catalysed reaction is Na(+)(in) + 2 H(+)(out) = Na(+)(out) + 2 H(+)(in). In terms of biological role, na(+)/H(+) antiporter that extrudes sodium in exchange for external protons. This is Na(+)/H(+) antiporter NhaA from Shewanella baltica (strain OS195).